We begin with the raw amino-acid sequence, 435 residues long: Succinate--CoA ligase [ADP-forming] subunit beta, mitochondrial (435 aa).

A mitochondrion-targeting transit peptide spans 1-20 (MIGRISQPLLNTSQKFMAPA). The ATP-grasp domain occupies 32–259 (MKILQNYEIK…SNAEFRQAKL (228 aa)). Residues K69 and 76-78 (GRG) contribute to the ATP site. Positions 229 and 243 each coordinate Mg(2+). Substrate is bound by residues N294 and 352–354 (GIM).

Belongs to the succinate/malate CoA ligase beta subunit family. ATP-specific subunit beta subfamily. As to quaternary structure, heterodimer of an alpha and a beta subunit. The beta subunit determines specificity for ATP. Mg(2+) is required as a cofactor.

Its subcellular location is the mitochondrion. The enzyme catalyses succinate + ATP + CoA = succinyl-CoA + ADP + phosphate. It functions in the pathway carbohydrate metabolism; tricarboxylic acid cycle; succinate from succinyl-CoA (ligase route): step 1/1. ATP-specific succinyl-CoA synthetase functions in the citric acid cycle (TCA), coupling the hydrolysis of succinyl-CoA to the synthesis of ATP and thus represents the only step of substrate-level phosphorylation in the TCA. The beta subunit provides nucleotide specificity of the enzyme and binds the substrate succinate, while the binding sites for coenzyme A and phosphate are found in the alpha subunit. The sequence is that of Succinate--CoA ligase [ADP-forming] subunit beta, mitochondrial from Caenorhabditis elegans.